The following is a 179-amino-acid chain: Inner membrane-spanning protein YciB (179 aa).

5 consecutive transmembrane segments (helical) span residues 22 to 42, 50 to 70, 76 to 96, 121 to 141, and 149 to 169; these read IYAATAALIVATAIVLIYSWV, MALITFVLVVVFGGLTLFFHN, WKVTVIYALFAGALLVSQWVM, LAWAVFFILCGLANIYIAFWL, and FKVFGLTALTLIFTLLSGVYI.

The protein belongs to the YciB family.

The protein localises to the cell inner membrane. In terms of biological role, plays a role in cell envelope biogenesis, maintenance of cell envelope integrity and membrane homeostasis. The chain is Inner membrane-spanning protein YciB from Escherichia fergusonii (strain ATCC 35469 / DSM 13698 / CCUG 18766 / IAM 14443 / JCM 21226 / LMG 7866 / NBRC 102419 / NCTC 12128 / CDC 0568-73).